The following is a 568-amino-acid chain: Proton-coupled zinc antiporter SLC30A9, mitochondrial (568 aa).

The N-terminal 67 residues, 1–67 (MLPGLAAAAA…IGTLSQVKLY (67 aa)), are a transit peptide targeting the mitochondrion. Transmembrane regions (helical) follow at residues 239-259 (VVMV…LAWI), 314-334 (GVGI…MGLL), 342-362 (LLWA…TLLV), 392-412 (VILL…TCMG), and 424-444 (SLGS…LIYT). The short motif at 462-466 (LTELL) is the LXXLL motif element.

The protein belongs to the cation diffusion facilitator (CDF) transporter (TC 2.A.4) family. SLC30A subfamily. In terms of assembly, interacts with GRIP1, ESR1 and AR. Ubiquitously expressed in fetal and adult tissues and cancer cell lines.

It localises to the mitochondrion membrane. It is found in the nucleus. Its subcellular location is the endoplasmic reticulum. The catalysed reaction is Zn(2+)(in) + 2 H(+)(out) = Zn(2+)(out) + 2 H(+)(in). Its function is as follows. Mitochondrial proton-coupled zinc ion antiporter mediating the export of zinc from the mitochondria and involved in zinc homeostasis, zinc mobilization as well as mitochondrial morphology and health. In nucleus, functions as a secondary coactivator for nuclear receptors by cooperating with p160 coactivators subtypes. Plays a role in transcriptional activation of Wnt-responsive genes. The chain is Proton-coupled zinc antiporter SLC30A9, mitochondrial from Homo sapiens (Human).